Here is a 563-residue protein sequence, read N- to C-terminus: MDYKKVIAERINKIVDMDVEALYKIIEIPPKKDMGDFALPCFQFAKVLRKAPNAIAEEVCKKIDQSGFEKVENLGPYINFFVDKADFAKETIESVLSERDNYGRSKVGEGKKVLIEYSSPNIAKPFHVGHLFGTVLGSSLYKIFSMEGYDCVRINHLGDWGTQFGKLISAYKRWCDEDALYKDPIKELLRIYVKFHKEAEKDPLLEDEGRMYFKRLEDGEKEEVELWTKFKDLSLREFKKVYNQIGVEFDSYTGESFYSDKIDAIEEELNEKGLLTESNGAKVVMLDEYNMPPCIIKKADGASIYATRDLAAAEYRKKTYNFDKSIYVVGLEQSLHFKQFLKTLELAGHEWSKDCIHVGYGLVRFAEGKLSTRNGDVIFLEDLLKESVQKTSEIIEEKNPELDNKEEVSRKVGIGAVIFTYLKNGRERDIIFDWKEMLSFEGETGPYVQYSYARAKSILRKLGEVKGNVSYDKLVSAEEFDLIKQLKGFNGAILNAIDRLEPSVITRYVIEVAKAFNKFYNAYNISNTSDEELKNARLALVEAASIVIKNALSLIGIDVVEEM.

A 'HIGH' region motif is present at residues P120–H130.

The protein belongs to the class-I aminoacyl-tRNA synthetase family. As to quaternary structure, monomer.

The protein localises to the cytoplasm. The catalysed reaction is tRNA(Arg) + L-arginine + ATP = L-arginyl-tRNA(Arg) + AMP + diphosphate. This Clostridium acetobutylicum (strain ATCC 824 / DSM 792 / JCM 1419 / IAM 19013 / LMG 5710 / NBRC 13948 / NRRL B-527 / VKM B-1787 / 2291 / W) protein is Arginine--tRNA ligase.